Reading from the N-terminus, the 104-residue chain is Thioredoxin-2 (104 aa).

In terms of domain architecture, Thioredoxin spans 2–104; it reads VTQLKSASEY…AIKQAIASNV (103 aa). Catalysis depends on nucleophile residues Cys31 and Cys34. An intrachain disulfide couples Cys31 to Cys34. Phosphoserine is present on Ser62. Residues Lys67 and Lys97 each participate in a glycyl lysine isopeptide (Lys-Gly) (interchain with G-Cter in ubiquitin) cross-link.

The protein belongs to the thioredoxin family. As to quaternary structure, monomer. Part of the heterodimeric LMA1 complex together with the proteinase inhibitor PBI2. LMA1 binds to the ATPase SEC18. In terms of processing, reversible disulfide bond formation between Cys-31 and Cys-34, reverted by thioredoxin reductase TRR1 using NADPH as hydrogen donor.

It is found in the cytoplasm. Its subcellular location is the golgi apparatus membrane. The protein resides in the nucleus. Functionally, participates as a hydrogen donor in redox reactions through the reversible oxidation of its active center dithiol to a disulfide, accompanied by the transfer of 2 electrons and 2 protons. It is involved in many cellular processes, including deoxyribonucleotide synthesis, repair of oxidatively damaged proteins, protein folding, sulfur metabolism, and redox homeostasis. Thioredoxin-dependent enzymes include phosphoadenosine-phosphosulfate reductase MET16, alkyl-hydroperoxide reductase DOT5, thioredoxin peroxidases TSA1 and TSA2, alkyl hydroperoxide reductase AHP1, and peroxiredoxin HYR1. Thioredoxin is also involved in protection against reducing stress. As part of the LMA1 complex, it is involved in the facilitation of vesicle fusion such as homotypic vacuole and ER-derived COPII vesicle fusion with the Golgi. This activity does not require the redox mechanism. Through its capacity to inactivate the stress response transcription factor YAP1 and its regulator the hydroperoxide stress sensor HYR1, it is involved in feedback regulation of stress response gene expression upon oxidative stress. In Saccharomyces cerevisiae (strain ATCC 204508 / S288c) (Baker's yeast), this protein is Thioredoxin-2 (TRX2).